A 454-amino-acid polypeptide reads, in one-letter code: Probable ECA polymerase (454 aa).

Helical transmembrane passes span 6 to 26, 37 to 57, 63 to 83, 122 to 142, 157 to 177, 183 to 203, 209 to 229, 230 to 250, 343 to 363, 380 to 400, and 411 to 431; these read FSGL…LTWF, VFFS…TSIL, VAVV…CFYA, MMAV…FLLF, GVAL…VYFL, AWLF…MIVG, IIIA…ISPG, MLAA…LKRY, LVVM…GLII, YKAA…IVLA, and VIFF…IYWL.

Belongs to the WzyE family. Probably part of a complex composed of WzxE, WzyE and WzzE.

It is found in the cell inner membrane. Its pathway is bacterial outer membrane biogenesis; enterobacterial common antigen biosynthesis. In terms of biological role, probably involved in the polymerization of enterobacterial common antigen (ECA) trisaccharide repeat units. This is Probable ECA polymerase from Cronobacter sakazakii (strain ATCC BAA-894) (Enterobacter sakazakii).